The following is a 147-amino-acid chain: NAD(P)H-quinone oxidoreductase subunit N (147 aa).

This sequence belongs to the complex I NdhN subunit family. As to quaternary structure, NDH-1 can be composed of about 15 different subunits; different subcomplexes with different compositions have been identified which probably have different functions.

Its subcellular location is the cellular thylakoid membrane. The enzyme catalyses a plastoquinone + NADH + (n+1) H(+)(in) = a plastoquinol + NAD(+) + n H(+)(out). It carries out the reaction a plastoquinone + NADPH + (n+1) H(+)(in) = a plastoquinol + NADP(+) + n H(+)(out). Its function is as follows. NDH-1 shuttles electrons from an unknown electron donor, via FMN and iron-sulfur (Fe-S) centers, to quinones in the respiratory and/or the photosynthetic chain. The immediate electron acceptor for the enzyme in this species is believed to be plastoquinone. Couples the redox reaction to proton translocation, and thus conserves the redox energy in a proton gradient. Cyanobacterial NDH-1 also plays a role in inorganic carbon-concentration. The protein is NAD(P)H-quinone oxidoreductase subunit N of Synechococcus sp. (strain JA-2-3B'a(2-13)) (Cyanobacteria bacterium Yellowstone B-Prime).